The sequence spans 151 residues: Deoxyuridine 5'-triphosphate nucleotidohydrolase (151 aa).

Substrate contacts are provided by residues 70-72, N83, 87-89, and M97; these read RSG and LID.

This sequence belongs to the dUTPase family. Requires Mg(2+) as cofactor.

It catalyses the reaction dUTP + H2O = dUMP + diphosphate + H(+). The protein operates within pyrimidine metabolism; dUMP biosynthesis; dUMP from dCTP (dUTP route): step 2/2. Its function is as follows. This enzyme is involved in nucleotide metabolism: it produces dUMP, the immediate precursor of thymidine nucleotides and it decreases the intracellular concentration of dUTP so that uracil cannot be incorporated into DNA. This chain is Deoxyuridine 5'-triphosphate nucleotidohydrolase, found in Psychromonas ingrahamii (strain DSM 17664 / CCUG 51855 / 37).